The sequence spans 264 residues: Glutamate racemase (264 aa).

Residues Asp12–Ser13 and Tyr44–Gly45 contribute to the substrate site. Catalysis depends on Cys75, which acts as the Proton donor/acceptor. Asn76–Thr77 provides a ligand contact to substrate. Catalysis depends on Cys186, which acts as the Proton donor/acceptor. Substrate is bound at residue Thr187–His188.

It belongs to the aspartate/glutamate racemases family.

It carries out the reaction L-glutamate = D-glutamate. Its pathway is cell wall biogenesis; peptidoglycan biosynthesis. Functionally, provides the (R)-glutamate required for cell wall biosynthesis. The protein is Glutamate racemase of Stutzerimonas stutzeri (strain A1501) (Pseudomonas stutzeri).